A 243-amino-acid chain; its full sequence is Nuclear protein UL4 homolog (243 aa).

The tract at residues 193-226 (RPDDQTTPTPTPHQYTSQRRQPETNCPSPQPAFF) is disordered. Residues 205–219 (HQYTSQRRQPETNCP) are compositionally biased toward polar residues.

This sequence belongs to the alphaherpesvirinae HHV-1 UL4 family.

It localises to the host nucleus. In Varicella-zoster virus (strain Oka vaccine) (HHV-3), this protein is Nuclear protein UL4 homolog.